Consider the following 677-residue polypeptide: Mitochondrial disaggregase (677 aa).

Residues 1 to 28 (MLGSLVSKRTAPAPRLLLQLLRSPSLRS) constitute a mitochondrion transit peptide. The interval 92–126 (PSPEDTLPGQDSWNGVLSRAGLGVWALATALVVHC) is autoinhibitory. 4 ANK repeats span residues 133 to 162 (SKDAALMEAARANNVQEVSRLLSEGADVNA), 166 to 195 (LGWTALMVAAINRNDSVVQVLLAAGADPNL), 235 to 265 (KGCTALHYAVLADDYRTVKELLDGGANPLQR), and 268 to 297 (MGHTPLDYAREGEVMKLLRTSETKYQEKQR). Histidine 316, isoleucine 318, serine 353, glycine 354, isoleucine 355, glycine 356, lysine 357, threonine 358, glutamate 425, and asparagine 466 together coordinate ATP. Residues 477 to 505 (LQLRQEALEMSRNRIAENLGDVQISDKIT) form a regulatory; slows ATPase and disaggregase activities region. ATP is bound at residue arginine 531. Lysine 559 bears the N6-acetyllysine mark. Arginine 590 lines the ATP pocket.

It belongs to the ClpA/ClpB family. In terms of assembly, homododecamer when substrate-bound; the homododecamer consists of 2 homohexamers stacked head-to-head via ANK repeat-mediated interactions. The active substrate-bound form is likely to exist in a dynamic equilibrium between homohexamers and homododecamers. Homotetradecamer in the unbound state which is remodeled upon substrate binding into the homododecamer. Interacts with PHB and PHB2. Interacts with MAVS; the interaction is enhanced by Sendai virus infection. Post-translationally, proteolytically cleaved by protease PARL. ATP-dependent protein disaggregase activity is stimulated by PARL-mediated cleavage of the N-terminal autoinhibitory peptide.

It is found in the mitochondrion intermembrane space. It catalyses the reaction ATP + H2O = ADP + phosphate + H(+). With respect to regulation, disaggregase activity is inhibited by ADP. In terms of biological role, functions as a regulatory ATPase and participates in secretion/protein trafficking process. Has ATP-dependent protein disaggregase activity and is required to maintain the solubility of key mitochondrial proteins. Involved in mitochondrial-mediated antiviral innate immunity, activates RIG-I-mediated signal transduction and production of IFNB1 and pro-inflammatory cytokine IL6. Plays a role in granulocyte differentiation. The chain is Mitochondrial disaggregase from Bos taurus (Bovine).